Consider the following 117-residue polypeptide: Conotoxin vil14.3 (117 aa).

The first 22 residues, 1 to 22 (MGFRVLVLVVMATTSALPFTFS), serve as a signal peptide directing secretion. The propeptide occupies 23–90 (EEPGRSPFRP…FAELSVGQRR (68 aa)). The disordered stretch occupies residues 53 to 79 (RADGQPPDMRQPEMRRPEMRRPEVRQP). Residues 62-79 (RQPEMRRPEMRRPEVRQP) are compositionally biased toward basic and acidic residues. Cystine bridges form between Cys-96-Cys-116 and Cys-100-Cys-112.

This sequence belongs to the conotoxin R superfamily. Expressed by the venom duct.

It localises to the secreted. This is Conotoxin vil14.3 from Conus villepinii (Villepin's cone).